Consider the following 344-residue polypeptide: tRNA N6-adenosine threonylcarbamoyltransferase (344 aa).

The Fe cation site is built by histidine 113 and histidine 117. Substrate-binding positions include 135–139, aspartate 169, glycine 182, aspartate 186, and asparagine 278; that span reads LVSGG. Aspartate 306 is a Fe cation binding site.

It belongs to the KAE1 / TsaD family. Fe(2+) is required as a cofactor.

The protein resides in the cytoplasm. The catalysed reaction is L-threonylcarbamoyladenylate + adenosine(37) in tRNA = N(6)-L-threonylcarbamoyladenosine(37) in tRNA + AMP + H(+). Its function is as follows. Required for the formation of a threonylcarbamoyl group on adenosine at position 37 (t(6)A37) in tRNAs that read codons beginning with adenine. Is involved in the transfer of the threonylcarbamoyl moiety of threonylcarbamoyl-AMP (TC-AMP) to the N6 group of A37, together with TsaE and TsaB. TsaD likely plays a direct catalytic role in this reaction. This Corynebacterium efficiens (strain DSM 44549 / YS-314 / AJ 12310 / JCM 11189 / NBRC 100395) protein is tRNA N6-adenosine threonylcarbamoyltransferase.